Consider the following 175-residue polypeptide: ATP-dependent protease subunit HslV (175 aa).

The active site involves threonine 2. Positions 158, 161, and 164 each coordinate Na(+).

The protein belongs to the peptidase T1B family. HslV subfamily. In terms of assembly, a double ring-shaped homohexamer of HslV is capped on each side by a ring-shaped HslU homohexamer. The assembly of the HslU/HslV complex is dependent on binding of ATP.

It is found in the cytoplasm. The enzyme catalyses ATP-dependent cleavage of peptide bonds with broad specificity.. Allosterically activated by HslU binding. Functionally, protease subunit of a proteasome-like degradation complex believed to be a general protein degrading machinery. The polypeptide is ATP-dependent protease subunit HslV (Haemophilus influenzae (strain 86-028NP)).